The chain runs to 315 residues: tRNA-dihydrouridine(16) synthase (315 aa).

Residues 7 to 9 (PME) and Gln-68 contribute to the FMN site. Cys-98 serves as the catalytic Proton donor. Residues Lys-139, 199–201 (NGE), and 223–224 (GR) contribute to the FMN site.

Belongs to the Dus family. DusC subfamily. FMN is required as a cofactor.

It catalyses the reaction 5,6-dihydrouridine(16) in tRNA + NADP(+) = uridine(16) in tRNA + NADPH + H(+). The catalysed reaction is 5,6-dihydrouridine(16) in tRNA + NAD(+) = uridine(16) in tRNA + NADH + H(+). In terms of biological role, catalyzes the synthesis of 5,6-dihydrouridine (D), a modified base found in the D-loop of most tRNAs, via the reduction of the C5-C6 double bond in target uridines. Specifically modifies U16 in tRNAs. In Shewanella oneidensis (strain ATCC 700550 / JCM 31522 / CIP 106686 / LMG 19005 / NCIMB 14063 / MR-1), this protein is tRNA-dihydrouridine(16) synthase.